Consider the following 207-residue polypeptide: Pyridoxine/pyridoxamine 5'-phosphate oxidase (207 aa).

Residues 53-58 (RMVLLK), 68-69 (YT), Lys75, and Gln97 each bind FMN. Lys58 lines the substrate pocket. Residues Tyr115, Arg119, and Ser123 each contribute to the substrate site. Residues 132–133 (QS) and Trp177 each bind FMN. 183 to 185 (RLH) provides a ligand contact to substrate. Residue Arg187 coordinates FMN.

It belongs to the pyridoxamine 5'-phosphate oxidase family. Homodimer. The cofactor is FMN.

It catalyses the reaction pyridoxamine 5'-phosphate + O2 + H2O = pyridoxal 5'-phosphate + H2O2 + NH4(+). The enzyme catalyses pyridoxine 5'-phosphate + O2 = pyridoxal 5'-phosphate + H2O2. It functions in the pathway cofactor metabolism; pyridoxal 5'-phosphate salvage; pyridoxal 5'-phosphate from pyridoxamine 5'-phosphate: step 1/1. It participates in cofactor metabolism; pyridoxal 5'-phosphate salvage; pyridoxal 5'-phosphate from pyridoxine 5'-phosphate: step 1/1. Functionally, catalyzes the oxidation of either pyridoxine 5'-phosphate (PNP) or pyridoxamine 5'-phosphate (PMP) into pyridoxal 5'-phosphate (PLP). This Bartonella quintana (strain Toulouse) (Rochalimaea quintana) protein is Pyridoxine/pyridoxamine 5'-phosphate oxidase.